The primary structure comprises 568 residues: O-fucosyltransferase 9 (568 aa).

Positions 1 to 19 are enriched in low complexity; the sequence is MHGLSRLGNGSSNGRINIP. The tract at residues 1–33 is disordered; it reads MHGLSRLGNGSSNGRINIPSPSPPSSPRIRHTR. The chain crosses the membrane as a helical; Signal-anchor for type II membrane protein span at residues 65–85; that stretch reads LLLAPLLYIAGMLLFMGSFGF. Residues asparagine 125, asparagine 151, asparagine 189, and asparagine 243 are each glycosylated (N-linked (GlcNAc...) asparagine). 336–338 lines the substrate pocket; the sequence is HLR. Asparagine 408 and asparagine 409 each carry an N-linked (GlcNAc...) asparagine glycan.

This sequence belongs to the glycosyltransferase GT106 family.

It localises to the membrane. Its pathway is glycan metabolism. The polypeptide is O-fucosyltransferase 9 (Arabidopsis thaliana (Mouse-ear cress)).